Reading from the N-terminus, the 122-residue chain is Holo-[acyl-carrier-protein] synthase (122 aa).

Asp8 and Glu56 together coordinate Mg(2+).

The protein belongs to the P-Pant transferase superfamily. AcpS family. Requires Mg(2+) as cofactor.

It localises to the cytoplasm. The catalysed reaction is apo-[ACP] + CoA = holo-[ACP] + adenosine 3',5'-bisphosphate + H(+). Transfers the 4'-phosphopantetheine moiety from coenzyme A to a Ser of acyl-carrier-protein. The chain is Holo-[acyl-carrier-protein] synthase from Alkaliphilus oremlandii (strain OhILAs) (Clostridium oremlandii (strain OhILAs)).